A 469-amino-acid polypeptide reads, in one-letter code: MSDIRVRFAPSPTGYLHVGGARTALFNWLLARKQGGTFILRIEDTDVERSTQESVDAILQGMEWLGLDWDEGPFYQTDNFPLYREYIQKLLDEGKAYRCYCTAEELEAKRELAMKEGRKPKYDGTCRDLTEQPADRPFVVRFRAPQDGGATSFNDLIKGTITFPNDELDDLIVQRSDGTPTYNFCVVIDDAIMKITTVIRGDDHVNNTPRQVQLYQALGFPVPQFAHVPMILGSDKARLSKRHGATSVIAYRDMGFLPEALMNYLVRLGWSHGDDEIFSRDEMVAKFDISNVGRSPSVFNPDKLLWLNAHYIKHGDPQRLADLLVPFLKMRGVDPANGGPQLAVAIKTLQERARTMLEMADSALFYYHAPESYDRTALAKFEKEHLLAVYATVAEKLSAATAVTAAEFDALFKEICAEKGWKMPQVGQPVRIALSGGTHAPGIGEIIVTLGKEETIQRIQRAREFVEKQ.

A 'HIGH' region motif is present at residues 10–20 (PSPTGYLHVGG). Zn(2+) is bound by residues Cys99, Cys101, Cys126, and Asp128. The 'KMSKS' region signature appears at 238–242 (RLSKR). Lys241 is a binding site for ATP.

This sequence belongs to the class-I aminoacyl-tRNA synthetase family. Glutamate--tRNA ligase type 1 subfamily. In terms of assembly, monomer. Requires Zn(2+) as cofactor.

The protein localises to the cytoplasm. It carries out the reaction tRNA(Glu) + L-glutamate + ATP = L-glutamyl-tRNA(Glu) + AMP + diphosphate. Its function is as follows. Catalyzes the attachment of glutamate to tRNA(Glu) in a two-step reaction: glutamate is first activated by ATP to form Glu-AMP and then transferred to the acceptor end of tRNA(Glu). This Pelobacter propionicus (strain DSM 2379 / NBRC 103807 / OttBd1) protein is Glutamate--tRNA ligase.